The primary structure comprises 919 residues: Glutamate receptor ionotropic, kainate 3 (919 aa).

The first 31 residues, 1–31, serve as a signal peptide directing secretion; that stretch reads MTAPWRRLRSLVWEYWAGFLVCAFWIPDSRG. Residues 32 to 563 are Extracellular-facing; it reads MPHVIRIGGI…VFSFLNPLSP (532 aa). 7 N-linked (GlcNAc...) asparagine glycosylation sites follow: N70, N76, N278, N381, N415, N426, and N433. The cysteines at positions 99 and 350 are disulfide-linked. L-glutamate is bound by residues P518, T520, and R525. N-linked (GlcNAc...) asparagine glycans are attached at residues N548 and N551. Residues 564–584 form a helical membrane-spanning segment; sequence DIWMYVLLAYLGVSCVLFVIA. The Cytoplasmic segment spans residues 585 to 636; the sequence is RFSPYEWYDAHPCNPGSEVVENNFTLLNSFWFGMGSLMQQGSELMPKALSTR. Residues 637-657 traverse the membrane as a helical segment; the sequence is IIGGIWWFFTLIIISSYTANL. Topologically, residues 658–820 are extracellular; that stretch reads AAFLTVERME…KEASALGIQK (163 aa). Positions 691, 692, and 739 each coordinate L-glutamate. N-linked (GlcNAc...) asparagine glycosylation occurs at N752. Residues 821–841 traverse the membrane as a helical segment; the sequence is IGGIFIVLAAGLVLSVLVAVG. Residues 842 to 919 lie on the Cytoplasmic side of the membrane; the sequence is EFIYKLRKTA…CSTSLAPVFP (78 aa). S869 is subject to Phosphoserine. A Glycyl lysine isopeptide (Lys-Gly) (interchain with G-Cter in SUMO1) cross-link involves residue K887.

Belongs to the glutamate-gated ion channel (TC 1.A.10.1) family. GRIK3 subfamily. In terms of assembly, homotetramer, and heterotetramer with either GRIK4 or GRIK5. Can form functional heteromeric receptors with GRIK2. Interacts with PRKCABP. Interacts with NETO2. Detected in whole brain, cerebellum, brain cortex and hippocampus.

It localises to the cell membrane. The protein localises to the postsynaptic cell membrane. It carries out the reaction Ca(2+)(in) = Ca(2+)(out). Glutamate-gated receptor activity inhibited by spermine. Ionotropic glutamate receptor that functions as a cation-permeable ligand-gated ion channel, gated by L-glutamate and the glutamatergic agonist kainic acid. Binding of the excitatory neurotransmitter L-glutamate induces a conformation change, leading to the opening of the cation channel, and thereby converts the chemical signal to an electrical impulse. The receptor then desensitizes rapidly and enters a transient inactive state, characterized by the presence of bound agonist. In association with GRIK2, involved in presynaptic facilitation of glutamate release at hippocampal mossy fiber synapses. The chain is Glutamate receptor ionotropic, kainate 3 (Grik3) from Mus musculus (Mouse).